The primary structure comprises 344 residues: Holliday junction branch migration complex subunit RuvB (344 aa).

Positions 1–181 are large ATPase domain (RuvB-L); sequence MERIVTPAEM…FGVLCAMEYY (181 aa). ATP is bound by residues Leu20, Arg21, Gly62, Lys65, Thr66, Thr67, 128 to 130, Arg171, Tyr181, and Arg218; that span reads EDY. Thr66 provides a ligand contact to Mg(2+). The interval 182–252 is small ATPAse domain (RuvB-S); the sequence is DETQLKEIVI…EARDALELLE (71 aa). Positions 255–344 are head domain (RuvB-H); it reads NQGFDKVDNK…SNKGQTSFFK (90 aa). DNA contacts are provided by Arg310 and Arg315.

This sequence belongs to the RuvB family. Homohexamer. Forms an RuvA(8)-RuvB(12)-Holliday junction (HJ) complex. HJ DNA is sandwiched between 2 RuvA tetramers; dsDNA enters through RuvA and exits via RuvB. An RuvB hexamer assembles on each DNA strand where it exits the tetramer. Each RuvB hexamer is contacted by two RuvA subunits (via domain III) on 2 adjacent RuvB subunits; this complex drives branch migration. In the full resolvosome a probable DNA-RuvA(4)-RuvB(12)-RuvC(2) complex forms which resolves the HJ.

It localises to the cytoplasm. It carries out the reaction ATP + H2O = ADP + phosphate + H(+). The RuvA-RuvB-RuvC complex processes Holliday junction (HJ) DNA during genetic recombination and DNA repair, while the RuvA-RuvB complex plays an important role in the rescue of blocked DNA replication forks via replication fork reversal (RFR). RuvA specifically binds to HJ cruciform DNA, conferring on it an open structure. The RuvB hexamer acts as an ATP-dependent pump, pulling dsDNA into and through the RuvAB complex. RuvB forms 2 homohexamers on either side of HJ DNA bound by 1 or 2 RuvA tetramers; 4 subunits per hexamer contact DNA at a time. Coordinated motions by a converter formed by DNA-disengaged RuvB subunits stimulates ATP hydrolysis and nucleotide exchange. Immobilization of the converter enables RuvB to convert the ATP-contained energy into a lever motion, pulling 2 nucleotides of DNA out of the RuvA tetramer per ATP hydrolyzed, thus driving DNA branch migration. The RuvB motors rotate together with the DNA substrate, which together with the progressing nucleotide cycle form the mechanistic basis for DNA recombination by continuous HJ branch migration. Branch migration allows RuvC to scan DNA until it finds its consensus sequence, where it cleaves and resolves cruciform DNA. This is Holliday junction branch migration complex subunit RuvB from Clostridium botulinum (strain Eklund 17B / Type B).